Consider the following 70-residue polypeptide: Large ribosomal subunit protein uL29 (70 aa).

This sequence belongs to the universal ribosomal protein uL29 family.

This is Large ribosomal subunit protein uL29 from Clostridium botulinum (strain Eklund 17B / Type B).